The chain runs to 325 residues: D site-binding protein (325 aa).

Disordered stretches follow at residues 1-100 (MARP…PGLL), 124-198 (LEHG…DPDT), and 212-255 (LALS…EQKD). Over residues 17–28 (GPTGAPPGGGAL) the composition is skewed to gly residues. Low complexity-rich tracts occupy residues 29-38 (LGLRSLLQGT) and 71-80 (AGPADASAGA). Position 86 is a phosphoserine (Ser86). A compositionally biased stretch (low complexity) spans 88-100 (RGRPGAAPGPGLL). The span at 129 to 153 (PPSPPPPGGPSPAPSPVRTPAPSPR) shows a compositional bias: pro residues. Residues 166–176 (PGHAPARAALG) are compositionally biased toward low complexity. Residues 221 to 236 (ETFDPRRHRFSEEELK) are compositionally biased toward basic and acidic residues. One can recognise a bZIP domain in the interval 255 to 318 (DEKYWSRRYK…SHYRAVLSRY (64 aa)). Residues 257-279 (KYWSRRYKNNEAAKRSRDARRLK) form a basic motif region. A leucine-zipper region spans residues 283-297 (ISVRAAFLEKENALL).

The protein belongs to the bZIP family. PAR subfamily. As to quaternary structure, binds DNA as a homodimer or a heterodimer. Can form a heterodimer with TEF.

The protein resides in the nucleus. In terms of biological role, this transcriptional activator recognizes and binds to the sequence 5'-RTTAYGTAAY-3' found in the promoter of genes such as albumin, CYP2A4 and CYP2A5. It is not essential for circadian rhythm generation, but modulates important clock output genes. May be a direct target for regulation by the circadian pacemaker component clock. May affect circadian period and sleep regulation. The chain is D site-binding protein (DBP) from Bos taurus (Bovine).